The sequence spans 292 residues: MSQNKLELIKELRQRTNSALGDVKKALEATDYNIEAAIKWLKENGIVKAAKKSGRLASEGVVSAHGTPTQSLLLEVNSETDFVAQNEKFMTLVKNVTESVFKAGASTLEEALQVKVSDSETVEQALTDATAVIGEKITLRRVLASKAKEGHVLGTYLHANNRVAAVVEVTGSNSEVAKNVAMHLAAMNPEFVLVSDIPEDRMQEIKKAFEAPKDFDKKPAQIQERILSGWLDKQLGEVVLEKQPFVMEDSLTVAKYLANANAKLVSAHRYEVGEGLEKVQSNFAEEVASMTK.

An involved in Mg(2+) ion dislocation from EF-Tu region spans residues 80–83; it reads TDFV.

Belongs to the EF-Ts family.

Its subcellular location is the cytoplasm. Its function is as follows. Associates with the EF-Tu.GDP complex and induces the exchange of GDP to GTP. It remains bound to the aminoacyl-tRNA.EF-Tu.GTP complex up to the GTP hydrolysis stage on the ribosome. The sequence is that of Elongation factor Ts from Mycoplasmopsis synoviae (strain 53) (Mycoplasma synoviae).